A 252-amino-acid chain; its full sequence is Pimeloyl-[acyl-carrier protein] methyl ester esterase (252 aa).

An AB hydrolase-1 domain is found at 15–239 (LVMLHGWAMH…FPHCGHAPFL (225 aa)). Substrate is bound by residues Trp-21, 81-82 (SL), and 143-147 (FLTLQ). Ser-81 (nucleophile) is an active-site residue. Catalysis depends on residues Asp-207 and His-235. His-235 lines the substrate pocket.

The protein belongs to the AB hydrolase superfamily. Carboxylesterase BioH family. Monomer.

It localises to the cytoplasm. It carries out the reaction 6-carboxyhexanoyl-[ACP] methyl ester + H2O = 6-carboxyhexanoyl-[ACP] + methanol + H(+). Its pathway is cofactor biosynthesis; biotin biosynthesis. In terms of biological role, the physiological role of BioH is to remove the methyl group introduced by BioC when the pimeloyl moiety is complete. It allows to synthesize pimeloyl-ACP via the fatty acid synthetic pathway through the hydrolysis of the ester bonds of pimeloyl-ACP esters. The polypeptide is Pimeloyl-[acyl-carrier protein] methyl ester esterase (Nitrosomonas europaea (strain ATCC 19718 / CIP 103999 / KCTC 2705 / NBRC 14298)).